The chain runs to 21 residues: Hemolymph 65 kDa lectin BG04 (21 aa).

In terms of tissue distribution, hemolymph.

The protein localises to the secreted. Its function is as follows. Binds and precipitates antigens of the parasite Echinostoma paraensei. This is Hemolymph 65 kDa lectin BG04 (BG04) from Biomphalaria glabrata (Bloodfluke planorb).